We begin with the raw amino-acid sequence, 83 residues long: Exodeoxyribonuclease 7 small subunit (83 aa).

The protein belongs to the XseB family. Heterooligomer composed of large and small subunits.

The protein resides in the cytoplasm. It catalyses the reaction Exonucleolytic cleavage in either 5'- to 3'- or 3'- to 5'-direction to yield nucleoside 5'-phosphates.. Its function is as follows. Bidirectionally degrades single-stranded DNA into large acid-insoluble oligonucleotides, which are then degraded further into small acid-soluble oligonucleotides. The chain is Exodeoxyribonuclease 7 small subunit from Rhizobium rhizogenes (strain K84 / ATCC BAA-868) (Agrobacterium radiobacter).